We begin with the raw amino-acid sequence, 158 residues long: uncharacterized protein (158 aa).

Positions 1–26 are disordered; it reads MRASRSPPSPRRCHHHHEATGAASGA.

This is an uncharacterized protein from Homo sapiens (Human).